The chain runs to 299 residues: GTPase Era (299 aa).

The Era-type G domain occupies 9–177; that stretch reads RSGSVAVIGR…VGDLLKLVPE (169 aa). The tract at residues 17–24 is G1; the sequence is GRPNVGKS. 17-24 lines the GTP pocket; it reads GRPNVGKS. The tract at residues 43-47 is G2; sequence QTTRH. A G3 region spans residues 64–67; that stretch reads DTPG. Residues 64–68 and 126–129 each bind GTP; these read DTPGL and NKVD. The interval 126-129 is G4; the sequence is NKVD. The interval 156–158 is G5; that stretch reads VSA. The 85-residue stretch at 200-284 folds into the KH type-2 domain; that stretch reads VREQLMRQLG…FLETWVRVRE (85 aa).

This sequence belongs to the TRAFAC class TrmE-Era-EngA-EngB-Septin-like GTPase superfamily. Era GTPase family. Monomer.

It localises to the cytoplasm. The protein resides in the cell inner membrane. Functionally, an essential GTPase that binds both GDP and GTP, with rapid nucleotide exchange. Plays a role in 16S rRNA processing and 30S ribosomal subunit biogenesis and possibly also in cell cycle regulation and energy metabolism. The chain is GTPase Era from Xanthomonas oryzae pv. oryzae (strain MAFF 311018).